Reading from the N-terminus, the 883-residue chain is DNA mismatch repair protein MutS (883 aa).

633–640 (GPNMGGKS) is an ATP binding site.

The protein belongs to the DNA mismatch repair MutS family.

Functionally, this protein is involved in the repair of mismatches in DNA. It is possible that it carries out the mismatch recognition step. This protein has a weak ATPase activity. This chain is DNA mismatch repair protein MutS, found in Bordetella parapertussis (strain 12822 / ATCC BAA-587 / NCTC 13253).